Reading from the N-terminus, the 543-residue chain is Ribonuclease Y (543 aa).

The chain crosses the membrane as a helical span at residues 4–24 (IIMIPVATAIVSLLVGTVIGY). The KH domain maps to 233-296 (TVSVVDLPNE…EIAKRAMERL (64 aa)). The HD domain occupies 359 to 452 (VLSHSIEVGK…VVAADTISSA (94 aa)).

This sequence belongs to the RNase Y family.

It is found in the cell membrane. Functionally, endoribonuclease that initiates mRNA decay. The sequence is that of Ribonuclease Y from Lactobacillus helveticus (strain DPC 4571).